The primary structure comprises 358 residues: sn-glycerol-3-phosphate import ATP-binding protein UgpC (358 aa).

Residues 4 to 235 (VELKQVRKTY…PATLFVASFI (232 aa)) enclose the ABC transporter domain. 37-44 (GPSGCGKS) contributes to the ATP binding site.

This sequence belongs to the ABC transporter superfamily. sn-glycerol-3-phosphate importer (TC 3.A.1.1.3) family. The complex is composed of two ATP-binding proteins (UgpC), two transmembrane proteins (UgpA and UgpE) and a solute-binding protein (UgpB).

It localises to the cell inner membrane. It catalyses the reaction sn-glycerol 3-phosphate(out) + ATP + H2O = sn-glycerol 3-phosphate(in) + ADP + phosphate + H(+). In terms of biological role, part of the ABC transporter complex UgpBAEC involved in sn-glycerol-3-phosphate (G3P) import. Responsible for energy coupling to the transport system. This chain is sn-glycerol-3-phosphate import ATP-binding protein UgpC, found in Roseobacter denitrificans (strain ATCC 33942 / OCh 114) (Erythrobacter sp. (strain OCh 114)).